Reading from the N-terminus, the 129-residue chain is Small ribosomal subunit protein uS11 (129 aa).

This sequence belongs to the universal ribosomal protein uS11 family. Part of the 30S ribosomal subunit. Interacts with proteins S7 and S18. Binds to IF-3.

In terms of biological role, located on the platform of the 30S subunit, it bridges several disparate RNA helices of the 16S rRNA. Forms part of the Shine-Dalgarno cleft in the 70S ribosome. The protein is Small ribosomal subunit protein uS11 of Cereibacter sphaeroides (strain ATCC 17025 / ATH 2.4.3) (Rhodobacter sphaeroides).